A 40-amino-acid polypeptide reads, in one-letter code: Photosystem II reaction center protein J (40 aa).

A helical transmembrane segment spans residues 8–28; sequence IPLWIVGTVTGILVIGLIGVF.

This sequence belongs to the PsbJ family. PSII is composed of 1 copy each of membrane proteins PsbA, PsbB, PsbC, PsbD, PsbE, PsbF, PsbH, PsbI, PsbJ, PsbK, PsbL, PsbM, PsbT, PsbX, PsbY, PsbZ, Psb30/Ycf12, at least 3 peripheral proteins of the oxygen-evolving complex and a large number of cofactors. It forms dimeric complexes.

Its subcellular location is the plastid. The protein resides in the chloroplast thylakoid membrane. Functionally, one of the components of the core complex of photosystem II (PSII). PSII is a light-driven water:plastoquinone oxidoreductase that uses light energy to abstract electrons from H(2)O, generating O(2) and a proton gradient subsequently used for ATP formation. It consists of a core antenna complex that captures photons, and an electron transfer chain that converts photonic excitation into a charge separation. The polypeptide is Photosystem II reaction center protein J (Coffea arabica (Arabian coffee)).